Consider the following 242-residue polypeptide: Segregation and condensation protein A (242 aa).

It belongs to the ScpA family. Component of a cohesin-like complex composed of ScpA, ScpB and the Smc homodimer, in which ScpA and ScpB bind to the head domain of Smc. The presence of the three proteins is required for the association of the complex with DNA.

It localises to the cytoplasm. Functionally, participates in chromosomal partition during cell division. May act via the formation of a condensin-like complex containing Smc and ScpB that pull DNA away from mid-cell into both cell halves. This Lactococcus lactis subsp. lactis (strain IL1403) (Streptococcus lactis) protein is Segregation and condensation protein A.